Consider the following 1061-residue polypeptide: E3 SUMO-protein ligase ZNF451 (1061 aa).

The tract at residues Met-1–Pro-38 is disordered. The segment at Met-1–Leu-246 is sufficient for E3 SUMO-protein ligase activity. The segment at Met-1 to Val-344 is important for interaction with SUMO1 and SUMO2. Residues Asp-30–Gly-37 are interaction with SUMO2 1. The short motif at Pro-38–Pro-41 is the PLRP element. The tract at residues Val-42–Ser-50 is interaction with SUMO2 2. Residues Lys-75, Lys-77, Lys-106, Ile-121, Ala-130, Leu-138, Lys-139, Lys-144, and Lys-153 each participate in a glycyl lysine isopeptide (Lys-Gly) (interchain with G-Cter in SUMO2) cross-link. Ser-155 carries the post-translational modification Phosphoserine. Arg-158 is subject to Omega-N-methylarginine. Residues Val-164 and Lys-167 each participate in a glycyl lysine isopeptide (Lys-Gly) (interchain with G-Cter in SUMO2) cross-link. Residues Pro-168–His-525 are important for interaction with SMAD4. The C2H2-type 1 zinc-finger motif lies at Ile-169 to His-195. Residues Gln-226, Gly-240, Pro-247, Ser-263, Lys-270, Lys-275, Lys-283, Asp-286, Lys-288, Pro-293, Lys-301, and Lys-309 each participate in a glycyl lysine isopeptide (Lys-Gly) (interchain with G-Cter in SUMO2) cross-link. Residues Phe-253–His-277 form a C2H2-type 2 zinc finger. Residues Val-315–His-337 form a C2H2-type 3 zinc finger. A Glycyl lysine isopeptide (Lys-Gly) (interchain with G-Cter in SUMO2) cross-link involves residue Lys-357. The C2H2-type 4 zinc-finger motif lies at Gly-362–His-386. A Glycyl lysine isopeptide (Lys-Gly) (interchain with G-Cter in SUMO2) cross-link involves residue Lys-423. The residue at position 432 (Ser-432) is a Phosphoserine. Glycyl lysine isopeptide (Lys-Gly) (interchain with G-Cter in SUMO2) cross-links involve residues Lys-434, Lys-446, Lys-452, Lys-454, Lys-464, Phe-473, Val-490, Cys-500, Lys-505, Asp-508, Gly-522, Trp-532, Lys-543, and Lys-585. The C2H2-type 5 zinc finger occupies Tyr-498–His-521. The C2H2-type 6 zinc-finger motif lies at Phe-531–His-554. The C2H2-type 7; atypical zinc finger occupies Trp-606–His-631. Glycyl lysine isopeptide (Lys-Gly) (interchain with G-Cter in SUMO2) cross-links involve residues Lys-632, Lys-647, and Lys-664. The C2H2-type 8 zinc finger occupies Tyr-636–His-659. The segment at Tyr-667 to His-690 adopts a C2H2-type 9 zinc-finger fold. A Glycyl lysine isopeptide (Lys-Gly) (interchain with G-Cter in SUMO1); alternate cross-link involves residue Lys-706. Lys-706 is covalently cross-linked (Glycyl lysine isopeptide (Lys-Gly) (interchain with G-Cter in SUMO2); alternate). Glycyl lysine isopeptide (Lys-Gly) (interchain with G-Cter in SUMO2) cross-links involve residues Lys-731 and Lys-748. A C2H2-type 10 zinc finger spans residues Phe-753–His-776. Residues Lys-777, Lys-779, Lys-790, Lys-817, Lys-827, Lys-832, Lys-843, Lys-845, Lys-852, Lys-951, Lys-992, and Lys-993 each participate in a glycyl lysine isopeptide (Lys-Gly) (interchain with G-Cter in SUMO2) cross-link. The C2H2-type 11 zinc-finger motif lies at Ile-789 to His-812. The important for ubiquitin binding stretch occupies residues Leu-1050–Met-1061.

This sequence belongs to the krueppel C2H2-type zinc-finger protein family. Homooligomer. Interacts (via N-terminal region) with SUMO1. Interacts (via N-terminal region) with SUMO2. Interacts simultaneously with two SUMO2 chains. Identified in a complex with SUMO2 and UBE2I/UBC9, where one ZNF451 interacts with one UBE2I/UBC9 and two SUMO2 chains, one bound to the UBE2I/UBC9 active site and the other to another region of the same UBE2I/UBC9 molecule. Interacts (via C-terminus) with ubiquitin. Interacts (via N-terminal zinc-finger domains) with SMAD4 (via MH2 domain). Interacts with SMAD2 and SMAD3. Identified in a complex that contains at least ZNF451, SMAD2, SMAD3 and SMAD4. Interacts with EP300. Inhibits interaction between EP300 and the SMAD4 complex. Interacts with SIMC1. Post-translationally, sumoylated. Predominantly sumoylated on the N-terminal region that is important for interaction with SUMO1 and SUMO2. Sumoylation is important for localization in nuclear granules; desumoylation leads to diffuse nucleoplasmic location. Autosumoylated (in vitro). Sumoylation enhances E3 SUMO-protein ligase activity.

It localises to the nucleus. It is found in the PML body. The protein resides in the nucleoplasm. Its pathway is protein modification; protein sumoylation. Functionally, E3 SUMO-protein ligase; has a preference for SUMO2 and SUMO3 and facilitates UBE2I/UBC9-mediated sumoylation of target proteins. Plays a role in protein SUMO2 modification in response to stress caused by DNA damage and by proteasome inhibitors (in vitro). Required for MCM4 sumoylation. Has no activity with SUMO1. Preferentially transfers an additional SUMO2 chain onto the SUMO2 consensus site 'Lys-11'. Negatively regulates transcriptional activation mediated by the SMAD4 complex in response to TGF-beta signaling. Inhibits EP300-mediated acetylation of histone H3 at 'Lys-9'. Plays a role in regulating the transcription of AR targets. The polypeptide is E3 SUMO-protein ligase ZNF451 (ZNF451) (Homo sapiens (Human)).